Reading from the N-terminus, the 373-residue chain is Probable tRNA sulfurtransferase (373 aa).

The 105-residue stretch at 54–158 (NKNIEELSKV…NDVAYFYHKI (105 aa)) folds into the THUMP domain. ATP-binding positions include 176–177 (LF), 201–202 (NF), lysine 256, glycine 278, and glutamine 287.

Belongs to the ThiI family.

The protein resides in the cytoplasm. The enzyme catalyses [ThiI sulfur-carrier protein]-S-sulfanyl-L-cysteine + a uridine in tRNA + 2 reduced [2Fe-2S]-[ferredoxin] + ATP + H(+) = [ThiI sulfur-carrier protein]-L-cysteine + a 4-thiouridine in tRNA + 2 oxidized [2Fe-2S]-[ferredoxin] + AMP + diphosphate. The catalysed reaction is [ThiS sulfur-carrier protein]-C-terminal Gly-Gly-AMP + S-sulfanyl-L-cysteinyl-[cysteine desulfurase] + AH2 = [ThiS sulfur-carrier protein]-C-terminal-Gly-aminoethanethioate + L-cysteinyl-[cysteine desulfurase] + A + AMP + 2 H(+). It participates in cofactor biosynthesis; thiamine diphosphate biosynthesis. Catalyzes the ATP-dependent transfer of a sulfur to tRNA to produce 4-thiouridine in position 8 of tRNAs, which functions as a near-UV photosensor. Also catalyzes the transfer of sulfur to the sulfur carrier protein ThiS, forming ThiS-thiocarboxylate. This is a step in the synthesis of thiazole, in the thiamine biosynthesis pathway. The sulfur is donated as persulfide by IscS. The protein is Probable tRNA sulfurtransferase of Saccharolobus islandicus (strain M.16.27) (Sulfolobus islandicus).